The primary structure comprises 1394 residues: DNA-directed RNA polymerase subunit beta' (1394 aa).

Residues C71, C73, C86, and C89 each coordinate Zn(2+). Mg(2+) contacts are provided by D462, D464, and D466. Residues C810, C883, C890, and C893 each contribute to the Zn(2+) site.

Belongs to the RNA polymerase beta' chain family. As to quaternary structure, the RNAP catalytic core consists of 2 alpha, 1 beta, 1 beta' and 1 omega subunit. When a sigma factor is associated with the core the holoenzyme is formed, which can initiate transcription. Mg(2+) serves as cofactor. The cofactor is Zn(2+).

The enzyme catalyses RNA(n) + a ribonucleoside 5'-triphosphate = RNA(n+1) + diphosphate. Its function is as follows. DNA-dependent RNA polymerase catalyzes the transcription of DNA into RNA using the four ribonucleoside triphosphates as substrates. This chain is DNA-directed RNA polymerase subunit beta', found in Beijerinckia indica subsp. indica (strain ATCC 9039 / DSM 1715 / NCIMB 8712).